Reading from the N-terminus, the 257-residue chain is MSMVETAPSKIQVRDLNFYYGKFHALKNINLDIAKNQVTAFIGPSGSGKSTLLRTFNKMYSLYPEQRAEGEILLDGDNILTNTQDIALLRAKVGMVFQKPTPFPMSIYDNIAFGVRLFEKLFRADMDERVQWALTKAALWNETKDKLHQSGYSLSGGQQQRLCIARGIAIRPEVLLLDEPCSALDPISTGRIEELITELKQDYTVVIVTHNMQQAARCSDHTAFMYLGELIEFSNTDDLFTKPAKKQTEDYITGRYG.

Positions 11 to 252 (IQVRDLNFYY…PAKKQTEDYI (242 aa)) constitute an ABC transporter domain. 43-50 (GPSGSGKS) serves as a coordination point for ATP.

Belongs to the ABC transporter superfamily. Phosphate importer (TC 3.A.1.7) family. In terms of assembly, the complex is composed of two ATP-binding proteins (PstB), two transmembrane proteins (PstC and PstA) and a solute-binding protein (PstS).

The protein localises to the cell inner membrane. The enzyme catalyses phosphate(out) + ATP + H2O = ADP + 2 phosphate(in) + H(+). In terms of biological role, part of the ABC transporter complex PstSACB involved in phosphate import. Responsible for energy coupling to the transport system. The sequence is that of Phosphate import ATP-binding protein PstB from Salmonella choleraesuis (strain SC-B67).